Consider the following 303-residue polypeptide: Cytochrome c oxidase subunit 2 (303 aa).

The first 25 residues, 1–25, serve as a signal peptide directing secretion; it reads MRHSTTLTGCATGAAGLLAATAAAA. 2 consecutive transmembrane segments (helical) span residues 60 to 80 and 104 to 124; these read FILV…LYAV and WTIV…PVLF. His217, Cys252, Cys256, and His260 together coordinate Cu cation.

The protein belongs to the cytochrome c oxidase subunit 2 family. Cu cation serves as cofactor.

Its subcellular location is the cell membrane. The catalysed reaction is 4 Fe(II)-[cytochrome c] + O2 + 8 H(+)(in) = 4 Fe(III)-[cytochrome c] + 2 H2O + 4 H(+)(out). Functionally, subunits I and II form the functional core of the enzyme complex. Electrons originating in cytochrome c are transferred via heme a and Cu(A) to the binuclear center formed by heme a3 and Cu(B). This chain is Cytochrome c oxidase subunit 2 (ctaC), found in Cereibacter sphaeroides (Rhodobacter sphaeroides).